Consider the following 319-residue polypeptide: MSLNFLDFEQPIAELEAKIDSLTAVSRQDEKLDINIDEEVHRLREKSVELTRKIFADLGAWQVAQLARHPRRPYTLDYVRLAFDEFDELAGDRAYADDKAIVGGIARLDGRPVMIIGHQKGRETKEKIRRNFGMPAPEGYRKALRLMEMAERFKMPIITFIDTPGAYPGVGAEERGQSEAIARNLREMSRLSVPVICTVIGEGGSGGALAIGVGDKVNMLQYSTYSVISPEGCASILWKSADKAPLAAEAMGIVAPRLKELKLIDSIVQEPLGGAHRNPEAMAASLKAQLLADLADLDLLSEEELLNRRYQRLMSYGYA.

Positions asparagine 35 to aspartate 296 constitute a CoA carboxyltransferase C-terminal domain.

The protein belongs to the AccA family. Acetyl-CoA carboxylase is a heterohexamer composed of biotin carboxyl carrier protein (AccB), biotin carboxylase (AccC) and two subunits each of ACCase subunit alpha (AccA) and ACCase subunit beta (AccD).

It is found in the cytoplasm. It catalyses the reaction N(6)-carboxybiotinyl-L-lysyl-[protein] + acetyl-CoA = N(6)-biotinyl-L-lysyl-[protein] + malonyl-CoA. It participates in lipid metabolism; malonyl-CoA biosynthesis; malonyl-CoA from acetyl-CoA: step 1/1. Component of the acetyl coenzyme A carboxylase (ACC) complex. First, biotin carboxylase catalyzes the carboxylation of biotin on its carrier protein (BCCP) and then the CO(2) group is transferred by the carboxyltransferase to acetyl-CoA to form malonyl-CoA. In Klebsiella pneumoniae (strain 342), this protein is Acetyl-coenzyme A carboxylase carboxyl transferase subunit alpha.